Here is a 165-residue protein sequence, read N- to C-terminus: GTPase activating protein 1 (165 aa).

The C2 domain maps to 1–105 (MLGHLVGLVK…VVKMKIEGVA (105 aa)). Arg-22, Asp-23, Asp-28, Asp-74, Lys-75, Asp-76, and Asp-81 together coordinate Ca(2+).

This sequence belongs to the plant CAR protein family. As to quaternary structure, binds to PYR/PYL/RCAR abscisic acid intracellular receptors in an ABA-independent manner, both at the plasma membrane and in the nucleus. Binds phospholipids in a Ca(2+)-dependent manner. Interacts with YchF1.

It is found in the cell membrane. The protein localises to the nucleus. Its subcellular location is the cytoplasm. The protein resides in the cytosol. Its function is as follows. Mediates the transient calcium-dependent interaction of PYR/PYL/RCAR abscisic acid (ABA) receptors with the plasma membrane and thus regulates ABA sensitivity. Stimulates the GTPase/ATPase activities of YchF1, and regulates its subcellular localization. Promotes tolerance towards salinity stress by limiting the accumulation of reactive oxygen species (ROS). Promotes resistance to bacterial pathogens. The sequence is that of GTPase activating protein 1 from Oryza sativa subsp. indica (Rice).